Consider the following 46-residue polypeptide: Mu-segestritoxin-Sf1g (46 aa).

Disulfide bonds link Cys3-Cys19, Cys10-Cys22, Cys18-Cys42, and Cys24-Cys40. Positions 31 to 33 (RPW) are keys region for toxin activity.

Belongs to the neurotoxin 16 (SFI) family. Expressed by the venom gland.

It localises to the secreted. Its function is as follows. Insecticidal toxin. It inhibits insect voltage-gated sodium channels (Nav) by partially blocking the channel pore in DUM neurons from the American cockroach, not by acting as a gating modifier. The inhibition is only partially reversible after prolonged washout. In vivo, the toxin causes flaccid paralysis followed by death when injected into Heliothis virescens larvae. It also causes uncoordinated movements followed by full paralysis to sheep blowflies (Lucilia cuprina). When the toxin is fused to snowdrop lectin, it is orally active against larvae of the tomato moth (Laconobia oleracea), the rice brown planthopper (Nilaparvata lugens), and the peach-potato aphid (Myzus persicae). The protein is Mu-segestritoxin-Sf1g of Segestria florentina (Tube-web spider).